The primary structure comprises 478 residues: Kynurenine 3-monooxygenase (478 aa).

FAD contacts are provided by residues Val-19, 37-40, and Ala-57; that span reads YEAR. Residues Arg-85 and Tyr-99 each coordinate L-kynurenine. FAD is bound by residues Arg-111, Leu-136, Thr-172, Asp-304, and 317–318; that span reads MN. Residues Asn-363 and Tyr-398 each coordinate L-kynurenine. The next 2 helical transmembrane spans lie at 385-404 and 425-445; these read FLHA…VAFT and GLFV…VHHL.

It belongs to the aromatic-ring hydroxylase family. KMO subfamily. FAD is required as a cofactor. Highest activity in liver and kidney. Low activity in spleen, stomach, intestinal tract, esophagus, heart and lung.

The protein resides in the mitochondrion outer membrane. It carries out the reaction L-kynurenine + NADPH + O2 + H(+) = 3-hydroxy-L-kynurenine + NADP(+) + H2O. The protein operates within cofactor biosynthesis; NAD(+) biosynthesis; quinolinate from L-kynurenine: step 1/3. Functionally, catalyzes the hydroxylation of L-kynurenine (L-Kyn) to form 3-hydroxy-L-kynurenine (L-3OHKyn). Required for synthesis of quinolinic acid, a neurotoxic NMDA receptor antagonist and potential endogenous inhibitor of NMDA receptor signaling in axonal targeting, synaptogenesis and apoptosis during brain development. Quinolinic acid may also affect NMDA receptor signaling in pancreatic beta cells, osteoblasts, myocardial cells, and the gastrointestinal tract. The polypeptide is Kynurenine 3-monooxygenase (Rattus norvegicus (Rat)).